Consider the following 89-residue polypeptide: MNHKEKESVFVDLYDLYKEGELEDESMEWMKQHESLFQKNAEDLKSKTCLKRSPGAEEESQIRYMKVYLSSMYICFILLAIWMTVWFYF.

A helical transmembrane segment spans residues 67–86; that stretch reads VYLSSMYICFILLAIWMTVW.

The protein localises to the membrane. This is an uncharacterized protein from Bacillus subtilis (strain 168).